The chain runs to 3068 residues: Highly reducing polyketide synthase 17 (3068 aa).

Residues 100-526 (IEPIAIVGAS…GTNAHAIMER (427 aa)) form the Ketosynthase family 3 (KS3) domain. Active-site for beta-ketoacyl synthase activity residues include cysteine 274, histidine 410, and histidine 449. Positions 627 to 938 (YVFTGQGAQW…LAGPIRQCLA (312 aa)) are malonyl-CoA:ACP transacylase (MAT) domain. Serine 721 acts as the For malonyltransferase activity in catalysis. The segment at 1027–1160 (HHLLGVRMTE…GVVEGVMTLD (134 aa)) is N-terminal hotdog fold. The tract at residues 1027 to 1311 (HHLLGVRMTE…RASNIDMTIV (285 aa)) is dehydratase (DH) domain. The PKS/mFAS DH domain occupies 1027–1334 (HHLLGVRMTE…SRSLAAHVDG (308 aa)). The Proton acceptor; for dehydratase activity role is filled by histidine 1059. The tract at residues 1179 to 1334 (NRTMVIPEEL…SRSLAAHVDG (156 aa)) is C-terminal hotdog fold. Catalysis depends on aspartate 1247, which acts as the Proton donor; for dehydratase activity. Residues 1735–2037 (LGPVQSSKGD…LVRQGGKVIL (303 aa)) are enoylreductase (ER) domain. Residues 2062-2240 (AAYVVAGGMG…FLSMNIGWIE (179 aa)) form a catalytic ketoreductase (KR) domain region. In terms of domain architecture, Carrier spans 2345-2423 (TIIDFISSAI…DLAEKVASRS (79 aa)). Serine 2383 carries the O-(pantetheine 4'-phosphoryl)serine modification. The choline/carnitine acyltransferase (cAT) domain stretch occupies residues 2831 to 3062 (FDVASLGLRS…SCMITSLLED (232 aa)).

Its pathway is secondary metabolite biosynthesis. Its function is as follows. Highly reducing polyketide synthase; part of the gene cluster that mediates the biosynthesis of (2Z,4E,6E,10E)-9-hydroxydodeca-2,4,6,10-tetraenoic acid (BAA), (2E,4E,6E,10E)-9-hydroxydodeca-2,4,6,10-tetraenoic acid (BAB), and (2Z,4E,6E)-octa-2,4,6-trienedioic acid (PBA). The highly reducing polyketide synthase Ba17a is sufficent to produce PBA and BAA. The still to be characterized protein Ba17b leads to an increased production of BAA as well as to the production of the new compound BAB. BAA does not possess insecticidal activity against G.mellonella larvae, however, both BAA and BAB increase the growth of Candida albicans and BAA can mitigate the fungicidal effects of fluconazole over C.albicans, suggesting that generalist pathogens such as M.anisopliae, can potentially manipulate the yeast microbiota found in arthropods (and anywhere else) by the activity of compounds as BAA and BAB. The sequence is that of Highly reducing polyketide synthase 17 from Metarhizium anisopliae (Entomophthora anisopliae).